Here is a 170-residue protein sequence, read N- to C-terminus: NADH-dependent flavin reductase StyB (170 aa).

It belongs to the non-flavoprotein flavin reductase family. Homodimer.

It carries out the reaction a reduced flavin + NAD(+) = an oxidized flavin + NADH + 2 H(+). Its pathway is aromatic compound metabolism. Functionally, reductase component of a two-component system that catalyzes the first step in the aerobic styrene degradation pathway by enantioselective epoxidation of the vinyl side chain. Utilizes NADH to reduce FAD, which is then transferred to the styrene monooxygenase StyA. The chain is NADH-dependent flavin reductase StyB (styB) from Pseudomonas fluorescens.